Consider the following 159-residue polypeptide: Nucleoside diphosphate kinase (159 aa).

ATP is bound by residues lysine 13, phenylalanine 61, arginine 89, threonine 95, arginine 106, and asparagine 116. The active-site Pros-phosphohistidine intermediate is the histidine 119.

This sequence belongs to the NDK family. Mg(2+) is required as a cofactor.

It is found in the cytoplasm. It carries out the reaction a 2'-deoxyribonucleoside 5'-diphosphate + ATP = a 2'-deoxyribonucleoside 5'-triphosphate + ADP. It catalyses the reaction a ribonucleoside 5'-diphosphate + ATP = a ribonucleoside 5'-triphosphate + ADP. Major role in the synthesis of nucleoside triphosphates other than ATP. The ATP gamma phosphate is transferred to the NDP beta phosphate via a ping-pong mechanism, using a phosphorylated active-site intermediate. The protein is Nucleoside diphosphate kinase of Halorubrum lacusprofundi (strain ATCC 49239 / DSM 5036 / JCM 8891 / ACAM 34).